Reading from the N-terminus, the 158-residue chain is SUMO-conjugating enzyme UBC9 (158 aa).

Positions 4–157 (IALSRLAQER…VRAQAKKFSP (154 aa)) constitute a UBC core domain. Positions 13–18 (RKAWRK) are interaction with sumo1. Residue cysteine 93 is the Glycyl thioester intermediate of the active site.

The protein belongs to the ubiquitin-conjugating enzyme family. As to quaternary structure, forms a tight complex with RANGAP1 and RANBP2.

The protein localises to the nucleus. It participates in protein modification; protein sumoylation. Accepts the ubiquitin-like proteins SUMO1, SUMO2 and SUMO3 from the UBLE1A-UBLE1B E1 complex and catalyzes their covalent attachment to other proteins with the help of an E3 ligase such as RANBP2 or CBX4. Essential for nuclear architecture and chromosome segregation. This chain is SUMO-conjugating enzyme UBC9 (ube2i), found in Pagrus major (Red sea bream).